The primary structure comprises 537 residues: Syncytin-2 (537 aa).

An N-terminal signal peptide occupies residues 1-15; that stretch reads MGLLLLVLILTPLLA. The Extracellular segment spans residues 16 to 478; that stretch reads AYRHPDFPLL…GWLNWEGTWK (463 aa). The short motif at 43 to 46 is the CXXC element; sequence CWLC. Intrachain disulfides connect cysteine 43–cysteine 46, cysteine 43–cysteine 439, and cysteine 431–cysteine 438. N-linked (GlcNAc...) asparagine glycosylation is found at asparagine 133, asparagine 146, asparagine 177, asparagine 220, asparagine 241, asparagine 247, asparagine 312, and asparagine 332. The segment at 354 to 374 is fusion peptide; the sequence is FIPLLAGLGILAGTGTGIAGI. A CKS-17 motif is present at residues 414-430; sequence LQNRRGLDMLTAAQGGI. The CX6CC signature appears at 431–439; it reads CLALDEKCC. Asparagine 443 carries an N-linked (GlcNAc...) asparagine glycan. A helical membrane pass occupies residues 479–499; it reads WFSWVLPFIGPLVSLLLLLLF. The Cytoplasmic segment spans residues 500–537; it reads GPCLLNLITQFVSSRLQAIKLQTNGAGCRPRNIQESPF.

Belongs to the gamma type-C retroviral envelope protein family. HERV class-I FRD env subfamily. In terms of assembly, the surface and transmembrane proteins form a heterodimer. They are attached by non-covalent interactions or by a labile interchain disulfide bond. Specific enzymatic cleavages in vivo yield the mature SU and TM proteins. In terms of processing, the CXXC motif is highly conserved across a broad range of retroviral envelope proteins. It is thought to participate in the formation of a labile disulfide bond possibly with the CX6CC motif present in the transmembrane protein.

Its subcellular location is the virion. It localises to the cell membrane. Its function is as follows. This endogenous retroviral envelope protein has retained its original fusogenic properties and participates in trophoblast fusion and the formation of a syncytium during placenta morphogenesis. The interaction with MFSD2A is apparently important for this process. Functionally, endogenous envelope proteins may have kept, lost or modified their original function during evolution but this one can still make pseudotypes with MLV, HIV-1 or SIV-1 virions and confer infectivity. Retroviral envelope proteins mediate receptor recognition and membrane fusion during early infection. The surface protein mediates receptor recognition, while the transmembrane protein anchors the envelope heterodimer to the viral membrane through one transmembrane domain. The other hydrophobic domain, called fusion peptide, mediates fusion of the viral membrane with the target cell membrane. The polypeptide is Syncytin-2 (ERVFRD-1) (Macaca fascicularis (Crab-eating macaque)).